The chain runs to 267 residues: Orotidine 5'-phosphate decarboxylase (267 aa).

Substrate contacts are provided by residues Asp37, 59–61 (KTH), 91–100 (DRKFADIGNT), Tyr217, and Arg235. Catalysis depends on Lys93, which acts as the Proton donor.

Belongs to the OMP decarboxylase family.

The catalysed reaction is orotidine 5'-phosphate + H(+) = UMP + CO2. Its pathway is pyrimidine metabolism; UMP biosynthesis via de novo pathway; UMP from orotate: step 2/2. The polypeptide is Orotidine 5'-phosphate decarboxylase (URA3) (Eremothecium gossypii (strain ATCC 10895 / CBS 109.51 / FGSC 9923 / NRRL Y-1056) (Yeast)).